The chain runs to 1529 residues: uncharacterized protein (1529 aa).

Residues 1-11 (MDKNNNNNNSN) show a composition bias toward low complexity. Disordered regions lie at residues 1–85 (MDKN…SKGV), 335–371 (LLSN…WSSS), 660–694 (LPNL…TATA), 798–843 (NCNI…SSYS), 1016–1035 (SSLP…NTNN), 1334–1364 (QQQQ…QLQQ), and 1454–1497 (QQQV…SRLP). Residues 24-42 (QKRVQNPSFSSGQSRTVPS) show a composition bias toward polar residues. Over residues 51-79 (ISSSSSSSSISTTNNTTTTTTSGTGSTSS) the composition is skewed to low complexity. A compositionally biased stretch (low complexity) spans 810 to 833 (NNNNNNNNNNNNNNNNNNNNNNNN). Composition is skewed to polar residues over residues 834–843 (VLPRSNSSYS) and 1016–1027 (SSLPISQNLSDD). The segment covering 1454-1494 (QQQVQTPSSPQTLASLLGNSSSNTLTSSSSTLSLNESSTLS) has biased composition (low complexity).

This is an uncharacterized protein from Dictyostelium discoideum (Social amoeba).